The primary structure comprises 251 residues: UPF0246 protein TM1040_2658 (251 aa).

Belongs to the UPF0246 family.

This is UPF0246 protein TM1040_2658 from Ruegeria sp. (strain TM1040) (Silicibacter sp.).